Reading from the N-terminus, the 545-residue chain is Degenerin-like protein asic-2 (545 aa).

Residues 1–34 are Cytoplasmic-facing; the sequence is MRGGGFVQIFKDFSNWSTVAVVPHVANANNKISR. Residues 35 to 55 traverse the membrane as a helical segment; the sequence is IFWIAIFLFVLGMFAYELYIL. At 56-457 the chain is on the extracellular side; the sequence is IAKFFSYPAT…NVINDLGGQA (402 aa). Cysteine 83 and cysteine 191 form a disulfide bridge. N-linked (GlcNAc...) asparagine glycosylation is present at asparagine 201. 5 cysteine pairs are disulfide-bonded: cysteine 284–cysteine 370, cysteine 305–cysteine 366, cysteine 309–cysteine 364, cysteine 318–cysteine 343, and cysteine 320–cysteine 334. A glycan (N-linked (GlcNAc...) asparagine) is linked at asparagine 350. Residues 458-478 traverse the membrane as a helical segment; the sequence is GLWLGLSVISVVEMTGLMLVM. The GAS motif; ion selectivity filter motif lies at 462–464; the sequence is GLS. Topologically, residues 479 to 545 are cytoplasmic; that stretch reads GAFCVTGGAI…NKGDEEKKKK (67 aa). 2 stretches are compositionally biased toward basic and acidic residues: residues 514–523 and 534–545; these read DHLEKKHGEM and IENKGDEEKKKK. Residues 514 to 545 are disordered; sequence DHLEKKHGEMESGSDGEVDDIENKGDEEKKKK.

Belongs to the amiloride-sensitive sodium channel (TC 1.A.6) family. Can form homotrimers. Heterotrimer; forms functional heterotrimers producing channel with different properties.

Its subcellular location is the cell membrane. It carries out the reaction Na(+)(in) = Na(+)(out). With respect to regulation, inhibited by the diuretic drug amiloride. Its function is as follows. Could form pH-gated heterotrimeric sodium channels that act as postsynaptic excitatory sensors in the nervous system, generating rapid, transient inward currents that fully desensitize upon extracellular acidification. This chain is Degenerin-like protein asic-2 (asic-2), found in Caenorhabditis elegans.